We begin with the raw amino-acid sequence, 156 residues long: MPRRREVPKRDVLPDPKFGSVELTKFMNVLMIDGKKSVAERIVYGALEQIEKKTGKVAIEVFNEAIANAKPIVEVKSRRVGGANYQVPVEVRPSRRLALAMRWVRDAARKRGEKSMDLRLAGELIDASEGRGGALKKREEVHRMAEANKAFSHFRF.

Belongs to the universal ribosomal protein uS7 family. In terms of assembly, part of the 30S ribosomal subunit. Contacts proteins S9 and S11.

In terms of biological role, one of the primary rRNA binding proteins, it binds directly to 16S rRNA where it nucleates assembly of the head domain of the 30S subunit. Is located at the subunit interface close to the decoding center, probably blocks exit of the E-site tRNA. This Neisseria meningitidis serogroup C (strain 053442) protein is Small ribosomal subunit protein uS7.